Consider the following 323-residue polypeptide: tRNA U34 carboxymethyltransferase (323 aa).

Carboxy-S-adenosyl-L-methionine-binding positions include lysine 91, tryptophan 105, lysine 110, glycine 130, 152–154 (DPT), 181–182 (IE), methionine 196, tyrosine 200, and arginine 315.

The protein belongs to the class I-like SAM-binding methyltransferase superfamily. CmoB family. In terms of assembly, homotetramer.

The enzyme catalyses carboxy-S-adenosyl-L-methionine + 5-hydroxyuridine(34) in tRNA = 5-carboxymethoxyuridine(34) in tRNA + S-adenosyl-L-homocysteine + H(+). In terms of biological role, catalyzes carboxymethyl transfer from carboxy-S-adenosyl-L-methionine (Cx-SAM) to 5-hydroxyuridine (ho5U) to form 5-carboxymethoxyuridine (cmo5U) at position 34 in tRNAs. This is tRNA U34 carboxymethyltransferase from Shigella dysenteriae serotype 1 (strain Sd197).